Consider the following 79-residue polypeptide: Hematopoietic cell signal transducer (79 aa).

The first 18 residues, 1-18 (MAPPGHLLFLFLLPVAAS), serve as a signal peptide directing secretion. The Extracellular segment spans residues 19–35 (QTNEGSCSGCGPLSLPL). Residues 36–56 (LAGLVAADAVMSLLIVGVVFV) form a helical membrane-spanning segment. At 57-79 (CMRLHSRPAQEDGRVYINMPGRG) the chain is on the cytoplasmic side. At Tyr72 the chain carries Phosphotyrosine. A GRB2 binding site region spans residues 72–74 (YIN). The tract at residues 72-75 (YINM) is PIK3R1 binding site.

The protein belongs to the DAP10 family. As to quaternary structure, homodimer; Disulfide-linked. Heterohexamer composed of four subunits of HCST/DAP10 and two subunits of KLRK1. Interacts (via transmembrane domain) with KLRK1 (via transmembrane domain); the interaction is required for KLRK1 NK cell surface and induces NK cell-mediated cytotoxicity. Interacts with PIK3R1 and GRB2. Interacts with CLEC5A. Forms an CLEC5A/TYROBP/HCST trimolecular complex depending almost solely on TYROBP. Interacts with CD300H. Phosphorylated; PIK3R1 and GRB2 associate specifically with tyrosine-phosphorylated HCST. In terms of processing, O-glycosylated.

It localises to the membrane. In terms of biological role, transmembrane adapter protein which associates with KLRK1 to form an activation receptor KLRK1-HCST in lymphoid and myeloid cells; this receptor plays a major role in triggering cytotoxicity against target cells expressing cell surface ligands such as MHC class I chain-related MICA and MICB, and UL16-binding proteins (ULBPs); these ligands are up-regulated by stress conditions and pathological state such as viral infection and tumor transformation. Functions as a docking site for PI3-kinase PIK3R1 and GRB2. Interaction of ULBPs with KLRK1-HCST triggers calcium mobilization and activation of the PIK3R1, MAP2K/ERK, and JAK2/STAT5 signaling pathways. Both PIK3R1 and GRB2 are required for full KLRK1-HCST-mediated activation and ultimate killing of target cells. In NK cells, KLRK1-HCST signaling directly induces cytotoxicity and enhances cytokine production initiated via DAP12/TYROBP-associated receptors. In T-cells, it provides primarily costimulation for TCR-induced signals. KLRK1-HCST receptor plays a role in immune surveillance against tumors and is required for cytolysis of tumors cells; indeed, melanoma cells that do not express KLRK1 ligands escape from immune surveillance mediated by NK cells. The polypeptide is Hematopoietic cell signal transducer (Hcst) (Rattus norvegicus (Rat)).